The sequence spans 172 residues: Acetolactate synthase small subunit (172 aa).

One can recognise an ACT domain in the interval 4–79 (IITLTVVNRS…DVLKVTDITN (76 aa)).

It belongs to the acetolactate synthase small subunit family. Dimer of large and small chains.

The catalysed reaction is 2 pyruvate + H(+) = (2S)-2-acetolactate + CO2. The protein operates within amino-acid biosynthesis; L-isoleucine biosynthesis; L-isoleucine from 2-oxobutanoate: step 1/4. It functions in the pathway amino-acid biosynthesis; L-valine biosynthesis; L-valine from pyruvate: step 1/4. The chain is Acetolactate synthase small subunit (ilvH) from Bacillus subtilis (strain 168).